We begin with the raw amino-acid sequence, 220 residues long: Iron-sulfur flavoprotein AF_1436 (220 aa).

Residues cysteine 47, cysteine 50, cysteine 53, and cysteine 59 each coordinate [4Fe-4S] cluster.

Belongs to the SsuE family. Isf subfamily. As to quaternary structure, homodimer. Requires FMN as cofactor. The cofactor is [4Fe-4S] cluster.

In terms of biological role, redox-active protein probably involved in electron transport. In Archaeoglobus fulgidus (strain ATCC 49558 / DSM 4304 / JCM 9628 / NBRC 100126 / VC-16), this protein is Iron-sulfur flavoprotein AF_1436.